Here is a 134-residue protein sequence, read N- to C-terminus: Small ribosomal subunit protein uS9 (134 aa).

Positions 114-134 are disordered; the sequence is QKESKNFGGPGARAKYQKSYR.

Belongs to the universal ribosomal protein uS9 family.

In Methanosarcina acetivorans (strain ATCC 35395 / DSM 2834 / JCM 12185 / C2A), this protein is Small ribosomal subunit protein uS9.